A 526-amino-acid polypeptide reads, in one-letter code: Fluoride export protein 1 (526 aa).

2 disordered regions span residues 1–73 (MMTA…RRAS) and 90–149 (ASNI…KQAG). At 1–159 (MMTAPSDTEG…VVAKRQKVSR (159 aa)) the chain is on the cytoplasmic side. Composition is skewed to basic and acidic residues over residues 21–36 (SPDRNRQRNLVDDHNH) and 103–123 (PITRLDTLERVRTRDRDYLRE). Residues 160–180 (LATELYTISYLIFFSLLGTLA) traverse the membrane as a helical segment. Residues 181–194 (RLGLQALTSAYPQS) are Extracellular-facing. A helical membrane pass occupies residues 195 to 215 (PIIFPSIWPNFAGCVVMGFLA). Topologically, residues 216 to 260 (EDRMLFRPDWGQQQPNPKKDDDDDEEAKDIDPAAAKKAHMALKKT) are cytoplasmic. The disordered stretch occupies residues 223–242 (PDWGQQQPNPKKDDDDDEEA). The chain crosses the membrane as a helical span at residues 261–281 (IPLYVGLATGFCGSFTSFSSF). Over 282–310 (IRDIYLALSNDLAAHGSSAAPVSRNGGYS) the chain is Extracellular. The helical transmembrane segment at 311-331 (FMALLAVTITTISLSLSGLFA) threads the bilayer. Residues 332–361 (GAHLAIAIATLFTRFDLGLPYTFVSRILDR) lie on the Cytoplasmic side of the membrane. Residues 362–382 (LIVLLGFGCWLGAVLLSIWPP) form a helical membrane-spanning segment. The Extracellular segment spans residues 383–398 (DRHSAQPEKERWRGTA). Residues 399 to 419 (TFALVFAPLGCLTRFYASAHL) traverse the membrane as a helical segment. Topologically, residues 420-424 (NGRLP) are cytoplasmic. The helical transmembrane segment at 425 to 445 (SFPLGTFVVNMLGTAVLGMAW) threads the bilayer. Residues 446–452 (DLNHVPS) lie on the Extracellular side of the membrane. A helical transmembrane segment spans residues 453–473 (LGGVVGCQVLQGVADGFCGCL). Residues 474 to 492 (TTVSTWVSELAALRRRHAY) lie on the Cytoplasmic side of the membrane. Residues 493-513 (VYGGASVGGGLALMVVVMGSL) form a helical membrane-spanning segment. Residues 514–526 (RWTEGFGEVKCIS) lie on the Extracellular side of the membrane.

This sequence belongs to the fluoride channel Fluc/FEX (TC 1.A.43) family.

It is found in the cell membrane. The enzyme catalyses fluoride(in) = fluoride(out). In terms of biological role, fluoride channel required for the rapid expulsion of cytoplasmic fluoride. The chain is Fluoride export protein 1 from Neurospora crassa (strain ATCC 24698 / 74-OR23-1A / CBS 708.71 / DSM 1257 / FGSC 987).